The primary structure comprises 104 residues: Large ribosomal subunit protein uL24 (104 aa).

It belongs to the universal ribosomal protein uL24 family. Part of the 50S ribosomal subunit.

One of two assembly initiator proteins, it binds directly to the 5'-end of the 23S rRNA, where it nucleates assembly of the 50S subunit. In terms of biological role, one of the proteins that surrounds the polypeptide exit tunnel on the outside of the subunit. In Yersinia enterocolitica serotype O:8 / biotype 1B (strain NCTC 13174 / 8081), this protein is Large ribosomal subunit protein uL24.